We begin with the raw amino-acid sequence, 218 residues long: Zinc metalloproteinase-disintegrin-like bothrojarin-2 (218 aa).

Residues 14 to 100 enclose the Disintegrin domain; it reads PPVCGNELLE…QCPTDDFHKN (87 aa). Residues V16, L21, E23, E26, and D29 each coordinate Ca(2+). 10 disulfides stabilise this stretch: C28–C46, C30–C41, C40–C63, C54–C60, C59–C85, C72–C92, C79–C111, C104–C116, C123–C173, and C151–C161. The D/ECD-tripeptide signature appears at 78 to 80; that stretch reads ECD.

Belongs to the venom metalloproteinase (M12B) family. P-III subfamily. P-IIIa sub-subfamily. Monomer. The cofactor is Zn(2+). Post-translationally, glycosylated. Expressed by the venom gland.

It is found in the secreted. Its function is as follows. The hemorrhagic metalloproteinase-disintegrin-like bothrojarin-1 is a potent inhibitor of collagen-induced platelet aggregation by blockage of alpha-2/beta-1 (ITGA2/ITGB1) integrin. It does not present any fibrinogen-clotting activity. In Bothrops jararaca (Jararaca), this protein is Zinc metalloproteinase-disintegrin-like bothrojarin-2.